Here is a 184-residue protein sequence, read N- to C-terminus: uncharacterized protein (184 aa).

A helical membrane pass occupies residues tyrosine 5–histidine 27.

The protein localises to the membrane. This is an uncharacterized protein from Methanocaldococcus jannaschii (strain ATCC 43067 / DSM 2661 / JAL-1 / JCM 10045 / NBRC 100440) (Methanococcus jannaschii).